Here is a 396-residue protein sequence, read N- to C-terminus: Actin-related protein 6 (396 aa).

An N-acetylthreonine modification is found at threonine 2. The residue at position 260 (lysine 260) is an N6-acetyllysine.

It belongs to the actin family. ARP6 subfamily. As to quaternary structure, component of the chromatin-remodeling SRCAP complex composed of at least SRCAP, DMAP1, RUVBL1, RUVBL2, ACTL6A, YEATS4, ACTR6 and ZNHIT1. Interacts with CBX1, CBX3 and CBX5.

The protein localises to the cytoplasm. It localises to the cytoskeleton. It is found in the nucleus. Its subcellular location is the nucleolus. Its function is as follows. Required for formation and/or maintenance of proper nucleolar structure and function. Plays a dual role in the regulation of ribosomal DNA (rDNA) transcription. In the presence of high glucose, maintains active rDNA transcription through H2A.Z deposition and under glucose starvation, is required for the repression of rDNA transcription, and this function may be independent of H2A.Z. This Mus musculus (Mouse) protein is Actin-related protein 6 (Actr6).